The primary structure comprises 362 residues: Mannose-1-phosphate guanyltransferase (362 aa).

It belongs to the transferase hexapeptide repeat family.

It localises to the cytoplasm. It catalyses the reaction alpha-D-mannose 1-phosphate + GTP + H(+) = GDP-alpha-D-mannose + diphosphate. Its pathway is nucleotide-sugar biosynthesis; GDP-alpha-D-mannose biosynthesis; GDP-alpha-D-mannose from alpha-D-mannose 1-phosphate (GTP route): step 1/1. In terms of biological role, involved in cell wall synthesis where it is required for glycosylation. Involved in cell cycle progression through cell-size checkpoint. The sequence is that of Mannose-1-phosphate guanyltransferase (MPG1) from Candida albicans (strain SC5314 / ATCC MYA-2876) (Yeast).